The following is a 465-amino-acid chain: GDNF family receptor alpha-1 (465 aa).

An N-terminal signal peptide occupies residues 1-24 (MFLATLYFALPLLDLLLSAEVSGG). 3 consecutive repeat copies span residues 25-113 (DRLD…LQGN), 150-238 (KGNN…YEER), and 239-342 (EKPN…KNAI). Cysteine 36 and cysteine 42 are disulfide-bonded. An N-linked (GlcNAc...) asparagine glycan is attached at asparagine 59. 10 disulfide bridges follow: cysteine 154-cysteine 214, cysteine 161-cysteine 167, cysteine 178-cysteine 192, cysteine 187-cysteine 233, cysteine 216-cysteine 221, cysteine 243-cysteine 313, cysteine 250-cysteine 256, cysteine 267-cysteine 285, cysteine 277-cysteine 337, and cysteine 315-cysteine 325. N-linked (GlcNAc...) asparagine glycans are attached at residues asparagine 347 and asparagine 406. Serine 429 carries the GPI-anchor amidated serine lipid modification. Residues 430–465 (HITTKSMAAPPSCGLSPLLVLVVTALSTLLSLTETS) constitute a propeptide, removed in mature form.

It belongs to the GDNFR family. In terms of assembly, interacts with GDNF ligand and RET: forms a 2:2:2 ternary complex composed of GDNF ligand, GFRA1 and RET receptor. Interacts with SORL1, either alone or in complex with GDNF. Interaction between SORL1 and GFRA1 leads to GFRA1 internalization, but not degradation.

The protein resides in the cell membrane. Its subcellular location is the golgi apparatus. It is found in the trans-Golgi network. The protein localises to the endosome. It localises to the multivesicular body. Its function is as follows. Coreceptor for GDNF, a neurotrophic factor that enhances survival and morphological differentiation of dopaminergic neurons and increases their high-affinity dopamine uptake. GDNF-binding leads to autophosphorylation and activation of the RET receptor. In Homo sapiens (Human), this protein is GDNF family receptor alpha-1 (GFRA1).